The following is a 310-amino-acid chain: GMP synthase [glutamine-hydrolyzing] subunit B (310 aa).

Residues 2-185 (FKTEPFIEES…LGLPDQIAHR (184 aa)) form the GMPS ATP-PPase domain. An ATP-binding site is contributed by 29 to 35 (SGGVDSA).

Heterodimer composed of a glutamine amidotransferase subunit (A) and a GMP-binding subunit (B).

It carries out the reaction XMP + L-glutamine + ATP + H2O = GMP + L-glutamate + AMP + diphosphate + 2 H(+). It participates in purine metabolism; GMP biosynthesis; GMP from XMP (L-Gln route): step 1/1. Its function is as follows. Catalyzes the synthesis of GMP from XMP. The protein is GMP synthase [glutamine-hydrolyzing] subunit B of Methanococcus maripaludis (strain DSM 14266 / JCM 13030 / NBRC 101832 / S2 / LL).